We begin with the raw amino-acid sequence, 490 residues long: Argininosuccinate lyase (490 aa).

It belongs to the lyase 1 family. Argininosuccinate lyase subfamily.

It is found in the cytoplasm. The catalysed reaction is 2-(N(omega)-L-arginino)succinate = fumarate + L-arginine. The protein operates within amino-acid biosynthesis; L-arginine biosynthesis; L-arginine from L-ornithine and carbamoyl phosphate: step 3/3. This is Argininosuccinate lyase from Bifidobacterium longum subsp. infantis (strain ATCC 15697 / DSM 20088 / JCM 1222 / NCTC 11817 / S12).